We begin with the raw amino-acid sequence, 360 residues long: UDP-N-acetylglucosamine--N-acetylmuramyl-(pentapeptide) pyrophosphoryl-undecaprenol N-acetylglucosamine transferase (360 aa).

Residues 12–14 (TGG), asparagine 124, arginine 161, serine 189, isoleucine 243, and glutamine 288 each bind UDP-N-acetyl-alpha-D-glucosamine.

This sequence belongs to the glycosyltransferase 28 family. MurG subfamily.

It is found in the cell inner membrane. It catalyses the reaction di-trans,octa-cis-undecaprenyl diphospho-N-acetyl-alpha-D-muramoyl-L-alanyl-D-glutamyl-meso-2,6-diaminopimeloyl-D-alanyl-D-alanine + UDP-N-acetyl-alpha-D-glucosamine = di-trans,octa-cis-undecaprenyl diphospho-[N-acetyl-alpha-D-glucosaminyl-(1-&gt;4)]-N-acetyl-alpha-D-muramoyl-L-alanyl-D-glutamyl-meso-2,6-diaminopimeloyl-D-alanyl-D-alanine + UDP + H(+). The protein operates within cell wall biogenesis; peptidoglycan biosynthesis. In terms of biological role, cell wall formation. Catalyzes the transfer of a GlcNAc subunit on undecaprenyl-pyrophosphoryl-MurNAc-pentapeptide (lipid intermediate I) to form undecaprenyl-pyrophosphoryl-MurNAc-(pentapeptide)GlcNAc (lipid intermediate II). This chain is UDP-N-acetylglucosamine--N-acetylmuramyl-(pentapeptide) pyrophosphoryl-undecaprenol N-acetylglucosamine transferase, found in Acidithiobacillus ferrooxidans (strain ATCC 23270 / DSM 14882 / CIP 104768 / NCIMB 8455) (Ferrobacillus ferrooxidans (strain ATCC 23270)).